The sequence spans 364 residues: DNA replication and repair protein RecF (364 aa).

30 to 37 (GNNAQGKT) contacts ATP.

Belongs to the RecF family.

The protein resides in the cytoplasm. The RecF protein is involved in DNA metabolism; it is required for DNA replication and normal SOS inducibility. RecF binds preferentially to single-stranded, linear DNA. It also seems to bind ATP. The sequence is that of DNA replication and repair protein RecF from Clostridium botulinum (strain 657 / Type Ba4).